Consider the following 351-residue polypeptide: DNA polymerase IV (351 aa).

The region spanning 4–185 (IIHVDMDCFF…LPLAKIPGVG (182 aa)) is the UmuC domain. Mg(2+)-binding residues include Asp-8 and Asp-103. Glu-104 is a catalytic residue.

The protein belongs to the DNA polymerase type-Y family. In terms of assembly, monomer. The cofactor is Mg(2+).

It localises to the cytoplasm. It carries out the reaction DNA(n) + a 2'-deoxyribonucleoside 5'-triphosphate = DNA(n+1) + diphosphate. Poorly processive, error-prone DNA polymerase involved in untargeted mutagenesis. Copies undamaged DNA at stalled replication forks, which arise in vivo from mismatched or misaligned primer ends. These misaligned primers can be extended by PolIV. Exhibits no 3'-5' exonuclease (proofreading) activity. May be involved in translesional synthesis, in conjunction with the beta clamp from PolIII. This Escherichia coli O1:K1 / APEC protein is DNA polymerase IV.